The sequence spans 66 residues: UPF0434 protein Mnod_1613 (66 aa).

Belongs to the UPF0434 family.

The protein is UPF0434 protein Mnod_1613 of Methylobacterium nodulans (strain LMG 21967 / CNCM I-2342 / ORS 2060).